The chain runs to 821 residues: DNA ligase (821 aa).

Residues 33–37 (DVDYD), 82–83 (SL), and Glu113 each bind NAD(+). Lys115 (N6-AMP-lysine intermediate) is an active-site residue. NAD(+) is bound by residues Arg136, Glu173, Lys290, and Lys314. Zn(2+) is bound by residues Cys408, Cys411, Cys426, and Cys432. A BRCT domain is found at 741–821 (IVAGPLDGQT…RLLAYLAEHE (81 aa)).

This sequence belongs to the NAD-dependent DNA ligase family. LigA subfamily. The cofactor is Mg(2+). It depends on Mn(2+) as a cofactor.

It carries out the reaction NAD(+) + (deoxyribonucleotide)n-3'-hydroxyl + 5'-phospho-(deoxyribonucleotide)m = (deoxyribonucleotide)n+m + AMP + beta-nicotinamide D-nucleotide.. Its function is as follows. DNA ligase that catalyzes the formation of phosphodiester linkages between 5'-phosphoryl and 3'-hydroxyl groups in double-stranded DNA using NAD as a coenzyme and as the energy source for the reaction. It is essential for DNA replication and repair of damaged DNA. The sequence is that of DNA ligase from Stenotrophomonas maltophilia (strain K279a).